The following is a 355-amino-acid chain: MAPVTDTGIGLLCLCRQGFEPELAGELQFRAGEAGFAGYARTQRNDGYVLFMCDEAAALAPRLRWRELIFARQKLVVLAELPQLDPADRITPMLDVLADAPRFGDLWVEHPDSDAGKPLSGLARAFGNALRPALRKAGKLTDKPNNRLPRLHVVFVDGTHAFVCVADPADSAPWALGIPRLKLLPEAPSRSALKLDEALLTLLMPEEREALAKPGMRAADLGAAPGGWTWVLTRQHMHVLSIDNGPLRQHVLDTGLVEHLRADGFHWHPEQPLDWMVCDMVEQPRRVAERMATWFREGWCRHAIFNLKLPMKKRWDETRLCLDLFQDQAGKPLVVRAKQLYHDREEITVLASPLR.

Residues Ser-191, 224 to 227 (APGG), Asp-243, Asp-263, and Asp-279 each bind S-adenosyl-L-methionine. Lys-308 (proton acceptor) is an active-site residue.

The protein belongs to the class I-like SAM-binding methyltransferase superfamily. RNA methyltransferase RlmE family. RlmM subfamily. As to quaternary structure, monomer.

It localises to the cytoplasm. The catalysed reaction is cytidine(2498) in 23S rRNA + S-adenosyl-L-methionine = 2'-O-methylcytidine(2498) in 23S rRNA + S-adenosyl-L-homocysteine + H(+). Functionally, catalyzes the 2'-O-methylation at nucleotide C2498 in 23S rRNA. In Stenotrophomonas maltophilia (strain K279a), this protein is Ribosomal RNA large subunit methyltransferase M.